Reading from the N-terminus, the 416-residue chain is Probable 26S proteasome regulatory subunit rpn-6.2 (416 aa).

The PCI domain maps to 217–386 (YKTSFSYFYE…DTVVVYPKAD (170 aa)).

Belongs to the proteasome subunit S9 family. As to quaternary structure, component of the lid subcomplex of the 19S proteasome regulatory particle complex (also named PA700 complex). The 26S proteasome consists of a 20S proteasome core and two 19S regulatory subunits.

In terms of biological role, component of the lid subcomplex of the 26S proteasome, a multiprotein complex involved in the ATP-dependent degradation of ubiquitinated proteins. In the complex, rpn-6.2 is required for proteasome assembly. The protein is Probable 26S proteasome regulatory subunit rpn-6.2 (rpn-6.2) of Caenorhabditis elegans.